The sequence spans 171 residues: Myosin regulatory light polypeptide 9 (171 aa).

Over residues 1–15 (MSSKRAKAKTTKKRP) the composition is skewed to basic residues. The interval 1-21 (MSSKRAKAKTTKKRPQSATSN) is disordered. S2 bears the N-acetylserine mark. Position 19 is a phosphothreonine; by MLCK, CIT and ROCK2 (T19). S20 is subject to Phosphoserine; by CDC42BP, CIT, MLCK, PAK1, ROCK1, ROCK2, DAPK1, DAPK2 and ZIPK/DAPK3. EF-hand domains are found at residues 29 to 64 (SQIQEFKEAFNMIDQNRDGFIDKEDLHDMLASLGKN) and 98 to 133 (DPEDVIRNAFACFDEEASGFIHEDHLRELLTTMGDR). Ca(2+) is bound by residues D42, N44, D46, and D53.

As to quaternary structure, myosin is a hexamer of 2 heavy chains and 4 light chains: interacts with myosin heavy chain MYO19. Interacts with LUZP1; the interaction results in inhibition of phosphorylation of MYL9 by DAPK3. Phosphorylation increases the actin-activated myosin ATPase activity and thereby regulates the contractile activity. It is required to generate the driving force in the migration of the cells but not necessary for localization of myosin-2 at the leading edge. Phosphorylation is required for myotube formation. Phosphorylated by DAPK3; DAPK3-mediated phosphorylation is inhibited by LUZP1. In terms of tissue distribution, smooth muscle tissues and in some, but not all, nonmuscle cells.

It is found in the cytoplasm. The protein localises to the cytoskeleton. Its subcellular location is the cell cortex. Myosin regulatory subunit that plays an important role in regulation of both smooth muscle and nonmuscle cell contractile activity via its phosphorylation. Implicated in cytokinesis, receptor capping, and cell locomotion. In myoblasts, may regulate PIEZO1-dependent cortical actomyosin assembly involved in myotube formation. In Rattus norvegicus (Rat), this protein is Myosin regulatory light polypeptide 9 (Myl9).